The following is an 88-amino-acid chain: Molybdopterin synthase sulfur carrier subunit (88 aa).

The residue at position 88 (Gly-88) is a 1-thioglycine; alternate. The residue at position 88 (Gly-88) is a Glycyl adenylate; alternate.

Belongs to the MoaD family. MOCS2A subfamily. Heterotetramer; composed of 2 small (MOCS2A) and 2 large (MOCS2B) subunits. In terms of processing, C-terminal thiocarboxylation occurs in 2 steps, it is first acyl-adenylated (-COAMP) via the hesA/moeB/thiF part of MOCS3, then thiocarboxylated (-COSH) via the rhodanese domain of MOCS3. As to expression, widely expressed. Highest levels are found in heart and skeletal muscle. Lower levels are present in brain, kidney and pancreas. Very low levels are found in lung and peripheral blood leukocytes.

It localises to the cytoplasm. The protein resides in the cytosol. It participates in cofactor biosynthesis; molybdopterin biosynthesis. Functionally, acts as a sulfur carrier required for molybdopterin biosynthesis. Component of the molybdopterin synthase complex that catalyzes the conversion of precursor Z into molybdopterin by mediating the incorporation of 2 sulfur atoms into precursor Z to generate a dithiolene group. In the complex, serves as sulfur donor by being thiocarboxylated (-COSH) at its C-terminus by MOCS3. After interaction with MOCS2B, the sulfur is then transferred to precursor Z to form molybdopterin. This is Molybdopterin synthase sulfur carrier subunit from Homo sapiens (Human).